The primary structure comprises 201 residues: Ras-related protein Rab-10 (201 aa).

A GTP-binding site is contributed by 16 to 23 (GDSGVGKT). An Effector region motif is present at residues 38–46 (FISTIGIDF). GTP contacts are provided by residues 64-68 (DTAGQ), 122-125 (NKCD), and 152-154 (SAK). Residues 175-201 (PDSTDEQSRDTVNPVQPQRQSSSGGCC) are disordered. Over residues 184 to 201 (DTVNPVQPQRQSSSGGCC) the composition is skewed to polar residues. Residues C200 and C201 are each lipidated (S-geranylgeranyl cysteine).

The protein belongs to the small GTPase superfamily. Rab family. Interacts (GTP-bound form) with ehbp-1 (via C-terminal coiled coil). Interacts (GTP-bound form) with cnt-1 (via C-terminal ankyrin repeat). Interacts (GTP-bound form) with rab-5 GAP, tbc-2 (via putative coiled coil domain). Interacts (GTP-bound form) with amph-1. In terms of tissue distribution, almost ubiquitously expressed. Expressed in intestine, hypodermis, seam cells, body-wall muscles, many neurons, oviduct sheath cell, spermatheca, coelomocytes and pharyngeal and nerve ring.

The protein localises to the early endosome membrane. It is found in the late endosome membrane. Its subcellular location is the golgi apparatus membrane. The protein resides in the endosome membrane. It catalyses the reaction GTP + H2O = GDP + phosphate + H(+). Its activity is regulated as follows. Rab activation is generally mediated by a guanine exchange factor (GEF), while inactivation through hydrolysis of bound GTP is catalyzed by a GTPase activating protein (GAP). Tbc-4 is a likely GAP of this rab. Denn-4 is a putative GEF of this rab. The small GTPases Rab are key regulators of intracellular membrane trafficking, from the formation of transport vesicles to their fusion with membranes. Rabs cycle between an inactive GDP-bound form and an active GTP-bound form that is able to recruit to membranes different set of downstream effectors directly responsible for vesicle formation, movement, tethering and fusion. Required for basolateral endocytic recycling, the return of macromolecules and fluid from endosomes to the plasma membrane, in polarized epithelial cells of the intestine upstream of rme-1. Involved in the formation of the endosomal tubular network that is required for basolateral recycling of clathrin-independent endocytic cargo such as daf-4 in the intestine. Required for the recruitment of cnt-1 effector to endosomal membranes in the intestinal epithelium, which is important for the regulation of levels of endosomal phosphatidylinositol-4,5-bisphosphate, a key phosphoinositide in membrane traffic, and for the recruitment of endosomal membrane-bending proteins, rme-1 and sdpn-1. Recruits the rab-5 GTPase-activating protein tbc-2 to endosomes where it then inactivates rab-5 resulting in removal of rab-5 from membranes, which is necessary for cargo transport from early endosomes to recycling endosomes in the basolateral intestine. Regulates recycling of synaptic membrane AMPA glutamate receptor, glr-1, from intracellular endosomal compartments back to synapses in a cholesterol-dependent endocytosis pathway functioning after clathrin-independent endocytosis in command interneurons. Regulates neuropeptide release from dense core vesicles (DCVs) of cholinergic motoneurons in cooperation with rab-5. They reciprocally recruit each other's inactivating GAP molecule leading to local exclusion of one or the other rab protein at the Golgi-endosomal interphase at an essential stage during DCV sorting. Regulates membrane trafficking of membranes and dendrite proteins from the Golgi and/or endosomal compartments to plasma membrane during dendrite morphogenesis together with the exocyst complex in the multi-dendritic PVD sensory neurons acting in a cell-autonomous manner and requiring its GTPase activity. Functions cell-autonomously together with the exocyst complex to regulate dendrite morphogenesis and anterior-posterior patterning of the PVD neurons dendritic arbor by balancing the anterograde and retrograde transport via molecular motors unc-116 (kinesin heavy chain) and dhc-1 (dynein heavy chain) to appropriately transport branching factors, such as dma-1, to the specific subcellular regions of the developing dendrite in its GTPase activity-dependent manner. The protein is Ras-related protein Rab-10 of Caenorhabditis elegans.